The following is a 163-amino-acid chain: NF-kappa-B inhibitor-interacting Ras-like protein 2 (163 aa).

The small GTPase-like stretch occupies residues 1-163 (MGKSCKVVIC…SANWNLHPDH (163 aa)). Position 11–18 (11–18 (GQHGVGKT)) interacts with GTP. Residues 35 to 43 (MIETQEDIY) carry the Effector region motif. Residues 61–65 (DTRGL) and 120–123 (NKSD) each bind GTP.

The protein belongs to the small GTPase superfamily. Ras family. KappaB-Ras subfamily.

The protein localises to the cytoplasm. In terms of biological role, atypical Ras-like protein that acts as a potent regulator of NF-kappa-B activity by preventing the degradation of NF-kappa-B inhibitor beta (NFKBIB) by most signals, explaining why NFKBIB is more resistant to degradation. In Xenopus laevis (African clawed frog), this protein is NF-kappa-B inhibitor-interacting Ras-like protein 2 (nkiras2).